The chain runs to 369 residues: MRAALEEYNQKVGPNNNNQSNTINLPPVGSNSNNINDNNNNSIQRKRGATVIGTREFHVPSDLKNHHNPYHSNYNNNNNNNNNSSSAITSGTVAPSSSMNNHQKEDDSYTSLKMRYLRSLNISIKQEAPTKDTNVSASAPIPIPIALSMGRGDLDSESDISEKEDDNDGSFDGNSSGNSFLKHNTIANSYLSGNQFKNNLNSYAGNGINSMNSLSSHFNNNNNSSNNNNNNNPNNNNNNNNNNNNNNNNNNNNNNNNNNNNNNNNNNNPNNNKNNNNNNGSNIINNSSNISKNNGFIMKSNSSNNIDNNNNNNNNNNNNNSNIYNKEDDEEQFDLDTSTTPPRKDSKGKGKHKFIPPHELLGAAGGDDD.

4 disordered regions span residues 1–42, 60–107, 146–177, and 214–369; these read MRAA…NNNS, PSDL…KEDD, ALSM…NSSG, and LSSH…GDDD. Polar residues predominate over residues 12 to 24; the sequence is VGPNNNNQSNTIN. Low complexity-rich tracts occupy residues 30–42 and 70–86; these read SNSN…NNNS and YHSN…NSSS. A compositionally biased stretch (polar residues) spans 87 to 101; that stretch reads AITSGTVAPSSSMNN. Residues 155-169 show a composition bias toward acidic residues; it reads DSESDISEKEDDNDG. Low complexity predominate over residues 219–324; that stretch reads NNNNNSSNNN…NNNNNNSNIY (106 aa).

This is an uncharacterized protein from Dictyostelium discoideum (Social amoeba).